The sequence spans 244 residues: Chlorosome protein I (244 aa).

A 2Fe-2S ferredoxin-type domain is found at 1–95 (MNLIINDKTA…TVKVLSRPEE (95 aa)). Residues Cys33, Cys39, Cys42, and Cys77 each contribute to the [2Fe-2S] cluster site.

Requires [2Fe-2S] cluster as cofactor.

The protein resides in the chlorosome. Could play a direct role in the oxidation or reduction of the quenching species formed in the chlorosome. The polypeptide is Chlorosome protein I (csmI) (Chlorobaculum tepidum (strain ATCC 49652 / DSM 12025 / NBRC 103806 / TLS) (Chlorobium tepidum)).